The following is a 306-amino-acid chain: Large ribosomal subunit protein uL2m (306 aa).

The N-terminal 60 residues, 1 to 60, are a transit peptide targeting the mitochondrion; sequence MALRVVTRALGSLSLTPRIAAVPGPSLLPAAQVTNNVLLQLPSASMLLPSRPLLTSVALS.

Belongs to the universal ribosomal protein uL2 family. As to quaternary structure, component of the mitochondrial ribosome large subunit (39S) which comprises a 16S rRNA and about 50 distinct proteins.

It localises to the mitochondrion. The protein is Large ribosomal subunit protein uL2m (MRPL2) of Bos taurus (Bovine).